The primary structure comprises 85 residues: Small ribosomal subunit protein eS21 (85 aa).

The protein belongs to the eukaryotic ribosomal protein eS21 family. In terms of assembly, component of the 40S small ribosomal subunit.

The protein localises to the cytoplasm. The protein resides in the cytosol. It is found in the rough endoplasmic reticulum. This Pectinaria gouldii (Trumpet worm) protein is Small ribosomal subunit protein eS21 (rps-21).